The primary structure comprises 304 residues: Large ribosomal subunit protein uL18z (304 aa).

The segment at 285 to 304 is disordered; sequence LNALNSSAGADDDDEEEDDE. The segment covering 294–304 has biased composition (acidic residues); that stretch reads ADDDDEEEDDE.

Belongs to the universal ribosomal protein uL18 family. In terms of assembly, component of the large ribosomal subunit (LSU).

It localises to the cytoplasm. It is found in the nucleus. In terms of biological role, component of the ribosome, a large ribonucleoprotein complex responsible for the synthesis of proteins in the cell. The small ribosomal subunit (SSU) binds messenger RNAs (mRNAs) and translates the encoded message by selecting cognate aminoacyl-transfer RNA (tRNA) molecules. The large subunit (LSU) contains the ribosomal catalytic site termed the peptidyl transferase center (PTC), which catalyzes the formation of peptide bonds, thereby polymerizing the amino acids delivered by tRNAs into a polypeptide chain. The nascent polypeptides leave the ribosome through a tunnel in the LSU and interact with protein factors that function in enzymatic processing, targeting, and the membrane insertion of nascent chains at the exit of the ribosomal tunnel. This is Large ribosomal subunit protein uL18z (RPL5A) from Oryza sativa subsp. japonica (Rice).